The following is a 194-amino-acid chain: UPF0232 protein MSMEG_0004/MSMEI_0006 (194 aa).

Residues 1–14 (MTGPFDDDGPEEDA) show a composition bias toward acidic residues. The interval 1–81 (MTGPFDDDGP…GPGPDARDPQ (81 aa)) is disordered. Positions 30 to 52 (DLVRRTLEEARGAARSQGKDVGR) are enriched in basic and acidic residues.

Belongs to the UPF0232 family.

This is UPF0232 protein MSMEG_0004/MSMEI_0006 from Mycolicibacterium smegmatis (strain ATCC 700084 / mc(2)155) (Mycobacterium smegmatis).